A 460-amino-acid polypeptide reads, in one-letter code: MSFTFAIIGRPNVGKSTLFNRLVGQKLALVDDTPGVTRDRREGEGRLGDLEFTIIDTAGLDEGAKGSLTARMQQQTETAIELADALMFVFDARAGLTPNDRAFADFARRANKPVVLVANKSEGKAGEIGAMESYALGLGDPVQISAEHGEGLSELYDALRALMPEPDVELEDDEEIDGLTEEDFSKRPIRVAIVGRPNAGKSTFINRLLGEDRLLTSPEAGTTRDSIAVEVNWKGRDFRIFDTAGLRRRSRIEEKLEKLSVADALRAVRFAEVVVLMMDSQNRFEEQDLRIADLIEREGRALVIAVNKWDLVERQGGQIAQLRTDADHWLPQIKGVPIVATSGMLGEGVDRMMEAIQDAYAVWNTRVPTAALNRWFEQAVAQNPPPAVAGRRLKLNYVTQTKARPPSFVVFCSRADAVPQSYLRYLVNSLRGVFELPGTPVRIMLREKANPFAHKRKRKS.

2 EngA-type G domains span residues 3 to 167 and 189 to 364; these read FTFA…PEPD and IRVA…AVWN. Residues 9–16, 56–60, 119–122, 195–202, 242–246, and 307–310 each bind GTP; these read GRPNVGKS, DTAGL, NKSE, GRPNAGKS, and NKWD. One can recognise a KH-like domain in the interval 365–449; sequence TRVPTAALNR…PVRIMLREKA (85 aa).

The protein belongs to the TRAFAC class TrmE-Era-EngA-EngB-Septin-like GTPase superfamily. EngA (Der) GTPase family. As to quaternary structure, associates with the 50S ribosomal subunit.

GTPase that plays an essential role in the late steps of ribosome biogenesis. This chain is GTPase Der, found in Rhodopseudomonas palustris (strain BisB5).